Consider the following 93-residue polypeptide: Putative ribosomal protein eL43-like (93 aa).

The C4-type zinc-finger motif lies at 40–61 (CSFCGKTKMKRRAVKIRHCNSC).

This sequence belongs to the eukaryotic ribosomal protein eL43 family.

This chain is Putative ribosomal protein eL43-like (RPL37AP8), found in Homo sapiens (Human).